A 949-amino-acid chain; its full sequence is Lon protease homolog, mitochondrial (949 aa).

Residues 1-65 (MAASTGYVRL…VLPGGVQWRG (65 aa)) constitute a mitochondrion transit peptide. 2 disordered regions span residues 68-94 (DSGN…TGEG) and 213-240 (EGLE…DELG). Positions 112–359 (LPLIAITRNP…KALSLLKKEF (248 aa)) constitute a Lon N-terminal domain. The span at 223–232 (KSRRKLKRGK) shows a compositional bias: basic residues. 512 to 519 (GPPGVGKT) contributes to the ATP binding site. Residues 748 to 938 (VTPPGVVMGL…RDIFPIAFPR (191 aa)) form the Lon proteolytic domain. Catalysis depends on residues S844 and K887.

It belongs to the peptidase S16 family. As to quaternary structure, homohexamer. Organized in a ring with a central cavity. The ATP-binding and proteolytic domains (AP-domain) form a hexameric chamber, while the N-terminal domain is arranged as a trimer of dimers. DNA and RNA binding is stimulated by substrate and inhibited by ATP binding. Interacts with TWNK and mitochondrial DNA polymerase subunit POLG. In terms of tissue distribution, detected in liver &gt; heart &gt; kidney &gt; testis.

The protein resides in the mitochondrion matrix. The catalysed reaction is Hydrolysis of proteins in presence of ATP.. Its function is as follows. ATP-dependent serine protease that mediates the selective degradation of misfolded, unassembled or oxidatively damaged polypeptides as well as certain short-lived regulatory proteins in the mitochondrial matrix. Endogenous substrates include mitochondrial steroidogenic acute regulatory (StAR) protein, DELE1, helicase Twinkle (TWNK) and the large ribosomal subunit protein MRPL32/bL32m. MRPL32/bL32m is protected from degradation by LONP1 when it is bound to a nucleic acid (RNA), but TWNK is not. May also have a chaperone function in the assembly of inner membrane protein complexes. Participates in the regulation of mitochondrial gene expression and in the maintenance of the integrity of the mitochondrial genome. Binds to mitochondrial promoters and RNA in a single-stranded, site-specific, and strand-specific manner. May regulate mitochondrial DNA replication and/or gene expression using site-specific, single-stranded DNA binding to target the degradation of regulatory proteins binding to adjacent sites in mitochondrial promoters. This chain is Lon protease homolog, mitochondrial (Lonp1), found in Mus musculus (Mouse).